Reading from the N-terminus, the 90-residue chain is RNA silencing suppressor (90 aa).

The interval 15 to 18 (KRRR) is basic.

The protein belongs to the carlaviruses nucleic acid-binding protein family.

Functionally, suppressor of viral-induced RNA silencing. The potential mechanism of action is based on sequestering siRNAs. This Grapevine virus A (isolate Is 151) (GVA) protein is RNA silencing suppressor (ORF5).